The sequence spans 82 residues: Delta-ctenitoxin-Pn2c (82 aa).

The first 17 residues, 1-17 (MKVAILFLSILVLAVAS), serve as a signal peptide directing secretion. The propeptide occupies 18–34 (ESIEESRDDFAVEELGR). 5 cysteine pairs are disulfide-bonded: Cys37-Cys51, Cys44-Cys57, Cys48-Cys80, Cys50-Cys65, and Cys59-Cys63.

Expressed by the venom gland.

The protein resides in the secreted. Reversible inhibitor of voltage-gated sodium channels (Nav). Delays the fast inactivation kinetics of neuronal-type sodium channels. In vivo, it induces rat penile erection. This effect may be due to the neuronal nitric oxide synthase (NOS1), since one of its selective inhibitor completely abolishes all the toxic effects of the toxin. This toxin also causes scratching, lacrimation, hypersalivation, sweating and agitation followed by spastic paralysis of the anterior and posterior extremities and death at dose levels of 0.24 mg/mouse. It is also insecticidal to the larval and adult forms of the house fly. The sequence is that of Delta-ctenitoxin-Pn2c from Phoneutria nigriventer (Brazilian armed spider).